The chain runs to 192 residues: Elongation factor P (192 aa).

Lysine 37 is subject to N6-(3,6-diaminohexanoyl)-5-hydroxylysine.

It belongs to the elongation factor P family. May be beta-lysylated on the epsilon-amino group of Lys-37 by the combined action of EpmA and EpmB, and then hydroxylated on the C5 position of the same residue by EpmC (if this protein is present). Lysylation is critical for the stimulatory effect of EF-P on peptide-bond formation. The lysylation moiety may extend toward the peptidyltransferase center and stabilize the terminal 3-CCA end of the tRNA. Hydroxylation of the C5 position on Lys-37 may allow additional potential stabilizing hydrogen-bond interactions with the P-tRNA.

The protein localises to the cytoplasm. It functions in the pathway protein biosynthesis; polypeptide chain elongation. Involved in peptide bond synthesis. Alleviates ribosome stalling that occurs when 3 or more consecutive Pro residues or the sequence PPG is present in a protein, possibly by augmenting the peptidyl transferase activity of the ribosome. Modification of Lys-37 is required for alleviation. This is Elongation factor P from Acinetobacter baylyi (strain ATCC 33305 / BD413 / ADP1).